We begin with the raw amino-acid sequence, 157 residues long: Protein Smg homolog (157 aa).

Belongs to the Smg family.

In Colwellia psychrerythraea (strain 34H / ATCC BAA-681) (Vibrio psychroerythus), this protein is Protein Smg homolog.